A 360-amino-acid chain; its full sequence is Phosphoserine aminotransferase (360 aa).

Residue Arg-41 coordinates L-glutamate. Pyridoxal 5'-phosphate-binding residues include Trp-101, Thr-152, Asp-172, and Gln-195. At Lys-196 the chain carries N6-(pyridoxal phosphate)lysine. 237-238 is a pyridoxal 5'-phosphate binding site; it reads NT.

This sequence belongs to the class-V pyridoxal-phosphate-dependent aminotransferase family. SerC subfamily. In terms of assembly, homodimer. It depends on pyridoxal 5'-phosphate as a cofactor.

It is found in the cytoplasm. It carries out the reaction O-phospho-L-serine + 2-oxoglutarate = 3-phosphooxypyruvate + L-glutamate. It catalyses the reaction 4-(phosphooxy)-L-threonine + 2-oxoglutarate = (R)-3-hydroxy-2-oxo-4-phosphooxybutanoate + L-glutamate. It functions in the pathway amino-acid biosynthesis; L-serine biosynthesis; L-serine from 3-phospho-D-glycerate: step 2/3. The protein operates within cofactor biosynthesis; pyridoxine 5'-phosphate biosynthesis; pyridoxine 5'-phosphate from D-erythrose 4-phosphate: step 3/5. Its function is as follows. Catalyzes the reversible conversion of 3-phosphohydroxypyruvate to phosphoserine and of 3-hydroxy-2-oxo-4-phosphonooxybutanoate to phosphohydroxythreonine. The sequence is that of Phosphoserine aminotransferase from Burkholderia ambifaria (strain MC40-6).